We begin with the raw amino-acid sequence, 174 residues long: AWQYFALEGVVTGGNYRKQGCCRPYEFPPCGRHGKEPYYGECYDTAKTPKCQKTCQRGYLKAYKEDKHFGKSAYRLPNNVKAIQRDIMKNGPVVAGFIVYEDFAHYKSGIYKHTAGRMTGGHAVKIIGWGKEKGTPYWLIANSWHDDWGEKGFYRMIRGINNCRIEEMVFAGIV.

Disulfide bonds link cysteine 22-cysteine 55 and cysteine 30-cysteine 42. Active-site residues include histidine 122 and asparagine 142.

The protein belongs to the peptidase C1 family.

Functionally, expression of the protease correlates with blood-feeding and suggests a role for the protease in blood digestion. The protein is Cathepsin B-like cysteine proteinase 3 (CP-3) of Ostertagia ostertagi (Brown stomach worm).